Consider the following 161-residue polypeptide: MTKLNELAPAPGSTKGRMRVGRGPGSGKGKTAGRGVKGQKARSGVAIAGFEGGQMPLHMRMPKRGFNNPFRLEFAEVNLWRLEQAVEAGKLKAGADVSVADLVAAGVIRRELDGVKLLGKGEIKSALKLTVYSATEAAIKAVEAAGGSVTVTKKAKVQAEA.

The interval Met-1 to Ala-41 is disordered. Over residues Arg-22–Val-36 the composition is skewed to gly residues.

This sequence belongs to the universal ribosomal protein uL15 family. As to quaternary structure, part of the 50S ribosomal subunit.

Its function is as follows. Binds to the 23S rRNA. The sequence is that of Large ribosomal subunit protein uL15 from Caulobacter sp. (strain K31).